The chain runs to 156 residues: S-ribosylhomocysteine lyase (156 aa).

Residues H56, H60, and C123 each contribute to the Fe cation site.

The protein belongs to the LuxS family. As to quaternary structure, homodimer. Requires Fe cation as cofactor.

The catalysed reaction is S-(5-deoxy-D-ribos-5-yl)-L-homocysteine = (S)-4,5-dihydroxypentane-2,3-dione + L-homocysteine. Its function is as follows. Involved in the synthesis of autoinducer 2 (AI-2) which is secreted by bacteria and is used to communicate both the cell density and the metabolic potential of the environment. The regulation of gene expression in response to changes in cell density is called quorum sensing. Catalyzes the transformation of S-ribosylhomocysteine (RHC) to homocysteine (HC) and 4,5-dihydroxy-2,3-pentadione (DPD). The protein is S-ribosylhomocysteine lyase of Staphylococcus haemolyticus (strain JCSC1435).